The chain runs to 547 residues: Chaperonin GroEL (547 aa).

ATP contacts are provided by residues 29 to 32 (TLGP), 86 to 90 (DGTTT), glycine 413, 478 to 480 (DVL), and aspartate 494.

It belongs to the chaperonin (HSP60) family. Forms a cylinder of 14 subunits composed of two heptameric rings stacked back-to-back. Interacts with the co-chaperonin GroES.

The protein localises to the cytoplasm. It carries out the reaction ATP + H2O + a folded polypeptide = ADP + phosphate + an unfolded polypeptide.. Functionally, together with its co-chaperonin GroES, plays an essential role in assisting protein folding. The GroEL-GroES system forms a nano-cage that allows encapsulation of the non-native substrate proteins and provides a physical environment optimized to promote and accelerate protein folding. The chain is Chaperonin GroEL from Alkaliphilus metalliredigens (strain QYMF).